The primary structure comprises 122 residues: Large ribosomal subunit protein uL14c (122 aa).

It belongs to the universal ribosomal protein uL14 family. In terms of assembly, part of the 50S ribosomal subunit.

It is found in the plastid. In terms of biological role, binds to 23S rRNA. The protein is Large ribosomal subunit protein uL14c of Cuscuta reflexa (Southern Asian dodder).